The following is a 110-amino-acid chain: Large ribosomal subunit protein uL22 (110 aa).

It belongs to the universal ribosomal protein uL22 family. Part of the 50S ribosomal subunit.

In terms of biological role, this protein binds specifically to 23S rRNA; its binding is stimulated by other ribosomal proteins, e.g. L4, L17, and L20. It is important during the early stages of 50S assembly. It makes multiple contacts with different domains of the 23S rRNA in the assembled 50S subunit and ribosome. The globular domain of the protein is located near the polypeptide exit tunnel on the outside of the subunit, while an extended beta-hairpin is found that lines the wall of the exit tunnel in the center of the 70S ribosome. This is Large ribosomal subunit protein uL22 from Mycoplasma mobile (strain ATCC 43663 / 163K / NCTC 11711) (Mesomycoplasma mobile).